The following is a 220-amino-acid chain: Iron-sulfur cluster repair protein YtfE (220 aa).

Belongs to the RIC family. YtfE subfamily. As to quaternary structure, homodimer.

It is found in the cytoplasm. In terms of biological role, di-iron-containing protein involved in the repair of iron-sulfur clusters damaged by oxidative and nitrosative stress conditions. This chain is Iron-sulfur cluster repair protein YtfE, found in Escherichia coli O6:K15:H31 (strain 536 / UPEC).